Consider the following 240-residue polypeptide: Uridylate kinase (240 aa).

13–16 (KASG) is a binding site for ATP. Residues 21-26 (GSQGFG) are involved in allosteric activation by GTP. Gly-55 contacts UMP. Positions 56 and 60 each coordinate ATP. Residues Asp-75 and 136-143 (TGNPFFTT) each bind UMP. Positions 163, 164, 169, and 172 each coordinate ATP.

It belongs to the UMP kinase family. Homohexamer.

It localises to the cytoplasm. It catalyses the reaction UMP + ATP = UDP + ADP. It participates in pyrimidine metabolism; CTP biosynthesis via de novo pathway; UDP from UMP (UMPK route): step 1/1. Its activity is regulated as follows. Allosterically activated by GTP. Inhibited by UTP. Its function is as follows. Catalyzes the reversible phosphorylation of UMP to UDP. The chain is Uridylate kinase from Brucella suis biovar 1 (strain 1330).